The chain runs to 94 residues: Small ribosomal subunit protein bS6 (94 aa).

Belongs to the bacterial ribosomal protein bS6 family.

Its function is as follows. Binds together with bS18 to 16S ribosomal RNA. This is Small ribosomal subunit protein bS6 from Alkaliphilus oremlandii (strain OhILAs) (Clostridium oremlandii (strain OhILAs)).